The following is a 159-amino-acid chain: Phosphopantetheine adenylyltransferase (159 aa).

Thr10 lines the substrate pocket. ATP contacts are provided by residues 10–11 and His18; that span reads TF. Positions 42, 74, and 88 each coordinate substrate. Residues 89–91, Glu99, and 124–130 contribute to the ATP site; these read GLR and NSFISST.

This sequence belongs to the bacterial CoaD family. Homohexamer. Requires Mg(2+) as cofactor.

It localises to the cytoplasm. The catalysed reaction is (R)-4'-phosphopantetheine + ATP + H(+) = 3'-dephospho-CoA + diphosphate. It functions in the pathway cofactor biosynthesis; coenzyme A biosynthesis; CoA from (R)-pantothenate: step 4/5. Reversibly transfers an adenylyl group from ATP to 4'-phosphopantetheine, yielding dephospho-CoA (dPCoA) and pyrophosphate. This Shewanella halifaxensis (strain HAW-EB4) protein is Phosphopantetheine adenylyltransferase.